The sequence spans 155 residues: DNA-directed RNA polymerase II subunit rpb4 (155 aa).

This sequence belongs to the eukaryotic RPB4 RNA polymerase subunit family. In terms of assembly, component of the RNA polymerase II (Pol II) complex consisting of 12 subunits. RPB4 and RPB7 form a subcomplex that protrudes from the 10-subunit Pol II core complex.

It localises to the nucleus. In terms of biological role, DNA-dependent RNA polymerase catalyzes the transcription of DNA into RNA using the four ribonucleoside triphosphates as substrates. Component of RNA polymerase II which synthesizes mRNA precursors and many functional non-coding RNAs. Pol II is the central component of the basal RNA polymerase II transcription machinery. It is composed of mobile elements that move relative to each other. RPB4 is part of a subcomplex with RPB7 that binds to a pocket formed by RPB1, RPB2 and RPB6 at the base of the clamp element. The RPB4-RPB7 subcomplex seems to lock the clamp via RPB7 in the closed conformation thus preventing double-stranded DNA to enter the active site cleft. The RPB4-RPB7 subcomplex binds single-stranded DNA and RNA. In Dictyostelium discoideum (Social amoeba), this protein is DNA-directed RNA polymerase II subunit rpb4 (polr2d).